Reading from the N-terminus, the 152-residue chain is Small ribosomal subunit protein uS19u (152 aa).

This sequence belongs to the universal ribosomal protein uS19 family.

The protein resides in the cytoplasm. This Arabidopsis thaliana (Mouse-ear cress) protein is Small ribosomal subunit protein uS19u (RPS15A).